The primary structure comprises 2547 residues: Piezo-type mechanosensitive ion channel component 1 (2547 aa).

Residues 1 to 12 (MEPHVLGAGLYW) lie on the Cytoplasmic side of the membrane. Residues 13–25 (LLLPCTLLAASLL) form a helical membrane-spanning segment. At 26 to 28 (RFN) the chain is on the extracellular side. Residues 29–44 (ALSLVYLLFLLLLPWL) form a helical membrane-spanning segment. The Cytoplasmic segment spans residues 45–58 (PGPSRHSIPGHTGR). Residues 59-81 (LLRALLCLSLLFLVAHLAFQICL) form a helical membrane-spanning segment. Residues 82 to 121 (HTVPHLDQFLGQNGSLWVKVSQHIGVTRLDLKDIFNTTRL) lie on the Extracellular side of the membrane. Asn-94 is a glycosylation site (N-linked (GlcNAc...) asparagine). Residues 122–138 (VAPDLGVLLASSLCLGL) traverse the membrane as a helical segment. Over 139–201 (CGRLTRKAGQ…ASRFRVTAHW (63 aa)) the chain is Cytoplasmic. The chain crosses the membrane as a helical span at residues 202–221 (LLMTSGRTLVIVLLALAGIA). Topologically, residues 222–223 (HP) are extracellular. Residues 224-243 (SAFSSIYLVVFLAICTWWSC) form a helical membrane-spanning segment. Over 244–254 (HFPLSPLGFNT) the chain is Cytoplasmic. The helical transmembrane segment at 255-275 (LCVMVSCFGAGHLICLYCYQT) threads the bilayer. The Extracellular segment spans residues 276 to 316 (PFIQDMLPPGNIWARLFGLKNFVDLPNYSSPNALVLNTKHA). The helical transmembrane segment at 317-337 (WPIYVSPGILLLLYYTATSLL) threads the bilayer. Residues 338-424 (KLHKSCPSEL…EMSPLHGLGH (87 aa)) lie on the Cytoplasmic side of the membrane. The tract at residues 347 to 387 (LRKETPREDEEHELELDHLEPEPQARDATQGEMPMTTEPDL) is disordered. Residues 361-371 (ELDHLEPEPQA) show a composition bias toward basic and acidic residues. A helical membrane pass occupies residues 425 to 445 (LIMDQSYVCALIAMMVWSIMY). At 446 to 447 (HS) the chain is on the extracellular side. Residues 448 to 463 (WLTFVLLLWACLIWTV) form a helical membrane-spanning segment. At 464–468 (RSRHQ) the chain is on the cytoplasmic side. A helical membrane pass occupies residues 469-491 (LAMLCSPCILLYGLTLCCLRYVW). At 492-518 (AMELPELPTTLGPVSLHQLGLEHTRYP) the chain is on the extracellular side. The helical transmembrane segment at 519–536 (CLDLGAMLLYLLTFWLLL) threads the bilayer. At 537 to 580 (RQFVKEKLLKKQKVPAALLEVTVADTEPTQTQTLLRSLGELVTG) the chain is on the cytoplasmic side. A helical transmembrane segment spans residues 581-601 (IYVKYWIYVCAGMFIVVSFAG). Arg-602 is a topological domain (extracellular). The helical transmembrane segment at 603 to 623 (LVVYKIVYMFLFLLCLTLFQV) threads the bilayer. The Cytoplasmic portion of the chain corresponds to 624 to 633 (YYTLWRKLLR). A helical membrane pass occupies residues 634 to 655 (VFWWLVVAYTMLVLIAVYTFQF). Topologically, residues 656–685 (QDFPTYWRNLTGFTDEQLGDLGLEQFSVSE) are extracellular. A helical transmembrane segment spans residues 686 to 702 (LFSSILIPGFFLLACIL). Residues 703–811 (QLHYFHRPFM…RRLLELHVFK (109 aa)) lie on the Cytoplasmic side of the membrane. Residue Ser-758 is modified to Phosphoserine. A helical transmembrane segment spans residues 812–823 (LVALYTVWVALK). Topologically, residues 824-826 (EVS) are extracellular. The helical transmembrane segment at 827–840 (VMNLLLVVLWAFAL) threads the bilayer. At 841–854 (PYPRFRPMASCLST) the chain is on the cytoplasmic side. Residues 855-869 (VWTCIIIVCKMLYQL) traverse the membrane as a helical segment. Residues 870–921 (KIVNPHEYSSNCTEPFPNNTNLQPLEINQSLLYRGPVDPANWFGVRKGYPNL) lie on the Extracellular side of the membrane. A helical transmembrane segment spans residues 922 to 949 (GYIQNHLQILLLLVFEAVVYRRQEHYRR). Over 950 to 989 (QHQQAPLPAQAVCADGTRQRLDQDLLSCLKYFINFFFYKF) the chain is Cytoplasmic. Residues 990–1005 (GLEICFLMAVNVIGQR) traverse the membrane as a helical segment. Over 1006–1007 (MN) the chain is Extracellular. The helical transmembrane segment at 1008–1023 (FMVILHGCWLVAILTR) threads the bilayer. The Cytoplasmic portion of the chain corresponds to 1024-1036 (RRREAIARLWPNY). Residues 1037 to 1052 (CLFLTLFLLYQYLLCL) form a helical membrane-spanning segment. Residues 1053-1091 (GMPPALCIDYPWRWSKAIPMNSALIKWLYLPDFFRAPNS) are Extracellular-facing. A helical membrane pass occupies residues 1092-1113 (TNLISDFLLLLCASQQWQVFSA). Residues 1114–1148 (ERTEEWQRMAGINTDHLEPLRGEPNPIPNFIHCRS) are Cytoplasmic-facing. The helical transmembrane segment at 1149–1175 (YLDMLKVAVFRYLFWLVLVVVFVAGAT) threads the bilayer. Residues 1176-1180 (RISIF) are Extracellular-facing. A helical transmembrane segment spans residues 1181 to 1199 (GLGYLLACFYLLLFGTTLL). At 1200–1212 (QKDTRAQLVLWDC) the chain is on the cytoplasmic side. Residues 1213–1231 (LILYNVTVIISKNMLSLLS) form a helical membrane-spanning segment. The Extracellular segment spans residues 1232-1280 (CVFVEQMQSNFCWVIQLFSLVCTVKGYYDPKEMMTRDRDCLLPVEEAGI). A helical membrane pass occupies residues 1281–1297 (IWDSICFFFLLLQRRIF). The Cytoplasmic segment spans residues 1298-1656 (LSHYFLHVSA…ELLLDRRLHI (359 aa)). Residues 1334–1365 (HRQIEEKSLAQLKRQMKRIRAKQEKYRQSQAS) are a coiled coil. Disordered stretches follow at residues 1354-1396 (AKQE…RRQW), 1456-1480 (RRER…DVEP), and 1567-1610 (TLSG…NTRS). Residues 1361-1372 (QSQASRGQLQSK) show a composition bias toward polar residues. Residues 1376–1392 (DPSQEPGPDSPGGSSPP) show a composition bias toward low complexity. 2 positions are modified to phosphoserine: Ser-1385 and Ser-1390. Positions 1592-1610 (SSMTDDTSSPLSTGYNTRS) are enriched in polar residues. Ser-1627, Ser-1631, and Ser-1646 each carry phosphoserine. Residues 1657 to 1700 (PELEEAERFEAQQGRTLRLLRAGYQCVAAHSELLCYFIIILNHM) traverse the membrane as a helical segment. Residues 1701–1704 (VTAS) lie on the Extracellular side of the membrane. The chain crosses the membrane as a helical span at residues 1705-1720 (AASLVLPVLVFLWAML). The Cytoplasmic portion of the chain corresponds to 1721–1728 (TIPRPSKR). The chain crosses the membrane as a helical span at residues 1729–1747 (FWMTAIVFTEVMVVTKYLF). At 1748–1779 (QFGFFPWNSYVVLRRYENKPYFPPRILGLEKT) the chain is on the extracellular side. The helical transmembrane segment at 1780 to 1801 (DSYIKYDLVQLMALFFHRSQLL) threads the bilayer. The Cytoplasmic portion of the chain corresponds to 1802–1976 (CYGLWDHEED…HTKYRAATDV (175 aa)). Composition is skewed to basic and acidic residues over residues 1816 to 1837 (DHCR…KLES) and 1855 to 1880 (PRDH…DLKP). Residues 1816-1931 (DHCRSSVKDR…RPRHTQEKSK (116 aa)) form a disordered region. Positions 1881 to 1894 (RHTRHISIRFRRRK) are enriched in basic residues. Positions 1912 to 1931 (GEGKETTERKRPRHTQEKSK) are enriched in basic and acidic residues. Residues 1977-1996 (YALMFLADIVDIIIIIFGFW) traverse the membrane as a helical segment. At 1997–2016 (AFGKHSAATDIASSLSDDQV) the chain is on the extracellular side. A helical membrane pass occupies residues 2017–2033 (PQAFLFMLLVQFGTMVI). The Cytoplasmic portion of the chain corresponds to 2034-2047 (DRALYLRKTVLGKL). A helical membrane pass occupies residues 2048 to 2068 (AFQVVLVVAIHIWMFFILPAV). Topologically, residues 2069–2076 (TERMFSQN) are extracellular. The chain crosses the membrane as a helical span at residues 2077-2092 (AVAQLWYFVKCIYFAL). The Cytoplasmic portion of the chain corresponds to 2093-2192 (SAYQIRCGYP…KKKIVKYGMG (100 aa)). A helical membrane pass occupies residues 2193–2213 (GLIILFLIAIIWFPLLFMSLI). Topologically, residues 2214 to 2457 (RSVVGVVNQP…IFSDKVSPPS (244 aa)) are extracellular. Cys-2437 and Cys-2441 are oxidised to a cystine. Residues 2458 to 2478 (LGFLAGYGIVGLYVSIVLVVG) form a helical membrane-spanning segment. Residues 2479 to 2547 (KFVRGFFSEI…TMIKWTRERE (69 aa)) lie on the Cytoplasmic side of the membrane.

Belongs to the PIEZO (TC 1.A.75) family. Homotrimer; the homotrimer forms a propeller-shaped Piezo channel with a cation-ion conducting pore. Heterotrimeric interaction may occur between PIEZO1 and PIEZO2. Interacts with PKD2. Interacts with STOMl3. Interacts with TMC1, TMC2, PCDG15 and CIB2; the interaction may be part of the MET complex. Interacts with MDFIC (via C-terminus); the interaction prolongs Piezo channel inactivation. Interacts with MDFI (via C-terminus); the interaction prolongs Piezo channel inactivation. Expressed in bladder, colon, kidney and skin. Also expressed in bone marrow, liver, lung, spleen and erythrocytes (at protein level). Expressed in myoblasts (at protein level). Expressed in red blood cells. Expressed in cochlear inner and outer hair cells (IHCs and OHCs) and vestibular organ HCs.

The protein localises to the endoplasmic reticulum membrane. Its subcellular location is the endoplasmic reticulum-Golgi intermediate compartment membrane. It is found in the cell membrane. The protein resides in the cell projection. It localises to the lamellipodium membrane. It carries out the reaction K(+)(in) = K(+)(out). The catalysed reaction is Na(+)(in) = Na(+)(out). It catalyses the reaction Ca(2+)(in) = Ca(2+)(out). The enzyme catalyses Mg(2+)(in) = Mg(2+)(out). Regulated by auxillary subunits MDFIC and MDFI. Down-regulated by phosphatidylserines exposed on the cell surface. Divalent ions decrease the single-channel permeability of K(+). Functionally, pore-forming subunit of the mechanosensitive non-specific cation Piezo channel required for rapidly adapting mechanically activated (MA) currents and has a key role in sensing touch and tactile pain. Piezo channels are homotrimeric three-blade propeller-shaped structures that utilize a cap-motion and plug-and-latch mechanism to gate their ion-conducting pathways. Generates currents characterized by a linear current-voltage relationship that are sensitive to ruthenium red and gadolinium. Conductance to monovalent alkali ions is highest for K(+), intermediate for Na(+) and lowest for Li(+). Divalent ions except for Mn(2+) permeate the channel but more slowly than the monovalent ions and they also reduce K(+) currents. Plays a key role in epithelial cell adhesion by maintaining integrin activation through R-Ras recruitment to the ER, most probably in its activated state, and subsequent stimulation of calpain signaling. In inner ear hair cells, PIEZO1/2 subunits may constitute part of the mechanotransducer (MET) non-selective cation channel complex where they may act as pore-forming ion-conducting component in the complex. In the kidney, may contribute to the detection of intraluminal pressure changes and to urine flow sensing. Acts as a shear-stress sensor that promotes endothelial cell organization and alignment in the direction of blood flow through calpain activation. Plays a key role in blood vessel formation and vascular structure in both development and adult physiology. Acts as a sensor of phosphatidylserine (PS) flipping at the plasma membrane and governs morphogenesis of muscle cells. In myoblasts, flippase-mediated PS enrichment at the inner leaflet of plasma membrane triggers channel activation and Ca(2+) influx followed by Rho GTPases signal transduction, leading to assembly of cortical actomyosin fibers and myotube formation. The polypeptide is Piezo-type mechanosensitive ion channel component 1 (Mus musculus (Mouse)).